A 32-amino-acid polypeptide reads, in one-letter code: Hainantoxin F8-35.23 (32 aa).

As to expression, expressed by the venom gland.

Its subcellular location is the secreted. The chain is Hainantoxin F8-35.23 from Cyriopagopus hainanus (Chinese bird spider).